The primary structure comprises 136 residues: uncharacterized protein (136 aa).

Residues F102–V118 traverse the membrane as a helical segment.

It localises to the membrane. This is an uncharacterized protein from Saccharomyces cerevisiae (strain ATCC 204508 / S288c) (Baker's yeast).